A 233-amino-acid polypeptide reads, in one-letter code: Uracil-DNA glycosylase (233 aa).

The active-site Proton acceptor is Asp-70.

It belongs to the uracil-DNA glycosylase (UDG) superfamily. UNG family.

Its subcellular location is the cytoplasm. The catalysed reaction is Hydrolyzes single-stranded DNA or mismatched double-stranded DNA and polynucleotides, releasing free uracil.. Its function is as follows. Excises uracil residues from the DNA which can arise as a result of misincorporation of dUMP residues by DNA polymerase or due to deamination of cytosine. The chain is Uracil-DNA glycosylase from Helicobacter acinonychis (strain Sheeba).